Consider the following 82-residue polypeptide: Cytochrome b-c1 complex subunit 8 (82 aa).

Residues 1–39 lie on the Mitochondrial matrix side of the membrane; that stretch reads MGREFGNLTRMRHVITYSLSPFEQRAFPHYFSKGIPNVL. K33 carries the post-translational modification N6-acetyllysine; alternate. K33 is subject to N6-succinyllysine; alternate. The helical transmembrane segment at 40–68 threads the bilayer; it reads RRMRACVLRVVPPFVAFYLVYTWGTQEFE. The Mitochondrial intermembrane portion of the chain corresponds to 69–82; it reads NSKRKNPAAYENDK.

Belongs to the UQCRQ/QCR8 family. As to quaternary structure, component of the ubiquinol-cytochrome c oxidoreductase (cytochrome b-c1 complex, complex III, CIII), a multisubunit enzyme composed of 11 subunits. The complex is composed of 3 respiratory subunits cytochrome b, cytochrome c1 and Rieske protein UQCRFS1, 2 core protein subunits UQCRC1/QCR1 and UQCRC2/QCR2, and 6 low-molecular weight protein subunits UQCRH/QCR6, UQCRB/QCR7, UQCRQ/QCR8, UQCR10/QCR9, UQCR11/QCR10 and subunit 9, the cleavage product of Rieske protein UQCRFS1. The complex exists as an obligatory dimer and forms supercomplexes (SCs) in the inner mitochondrial membrane with NADH-ubiquinone oxidoreductase (complex I, CI) and cytochrome c oxidase (complex IV, CIV), resulting in different assemblies (supercomplex SCI(1)III(2)IV(1) and megacomplex MCI(2)III(2)IV(2)). Interacts with UQCC6.

Its subcellular location is the mitochondrion inner membrane. Its function is as follows. Component of the ubiquinol-cytochrome c oxidoreductase, a multisubunit transmembrane complex that is part of the mitochondrial electron transport chain which drives oxidative phosphorylation. The respiratory chain contains 3 multisubunit complexes succinate dehydrogenase (complex II, CII), ubiquinol-cytochrome c oxidoreductase (cytochrome b-c1 complex, complex III, CIII) and cytochrome c oxidase (complex IV, CIV), that cooperate to transfer electrons derived from NADH and succinate to molecular oxygen, creating an electrochemical gradient over the inner membrane that drives transmembrane transport and the ATP synthase. The cytochrome b-c1 complex catalyzes electron transfer from ubiquinol to cytochrome c, linking this redox reaction to translocation of protons across the mitochondrial inner membrane, with protons being carried across the membrane as hydrogens on the quinol. In the process called Q cycle, 2 protons are consumed from the matrix, 4 protons are released into the intermembrane space and 2 electrons are passed to cytochrome c. This chain is Cytochrome b-c1 complex subunit 8 (UQCRQ), found in Ailuropoda melanoleuca (Giant panda).